The chain runs to 99 residues: Large ribosomal subunit protein uL23 (99 aa).

It belongs to the universal ribosomal protein uL23 family. In terms of assembly, part of the 50S ribosomal subunit. Contacts protein L29, and trigger factor when it is bound to the ribosome.

Functionally, one of the early assembly proteins it binds 23S rRNA. One of the proteins that surrounds the polypeptide exit tunnel on the outside of the ribosome. Forms the main docking site for trigger factor binding to the ribosome. The chain is Large ribosomal subunit protein uL23 from Clavibacter michiganensis subsp. michiganensis (strain NCPPB 382).